We begin with the raw amino-acid sequence, 436 residues long: Hydrolyase ccsE (436 aa).

The active-site Nucleophile is Ser-249.

The protein belongs to the AB hydrolase superfamily. FUS2 hydrolase family. As to quaternary structure, homodimer.

The protein operates within mycotoxin biosynthesis. In terms of biological role, hydrolyase; part of the gene cluster that mediates the biosynthesis of a family of the mycotoxins cytochalasins E and K. The hybrid PKS-NRPS synthetase ccsA and the enoyl reductase ccsC are responsible for fusion of phenylalanine with an octaketide backbone and subsequent release of the stable tetramic acid precursor. The polyketide synthase module (PKS) of the PKS-NRPS ccsA is responsible for the synthesis of the octaketide backbone. The downstream nonribosomal peptide synthetase (NRPS) amidates the carboxyl end of the octaketide with a phenylalanine. A reductase-like domain (R) at the C-terminus catalyzes the reductive release of the polyketide-amino acid intermediate. Because ccsA lacks a designated enoylreductase (ER) domain, the required activity is provided the enoyl reductase ccsC. Upon formation of the 11-membered carbocycle-fused perhydroisoindolone intermediate, a number of oxidative steps are required to afford the final cytochalasin E and K, including two hydroxylations at C17 and C18, one alcohol oxidation at C17, one epoxidation at C6 and C7 and two Baeyer-Villiger oxidations. The oxidative modification at C17, C18 and the C6-C7 epoxidation are likely to be catalyzed by the two cytochrome P450 oxygenases ccsD and ccsG. CcsD may be responsible for the epoxidation of the C6-C7 double bond. CcsG may be responsible for the successive oxidative modifications at C17 and C18. The double Baeyer-Villiger oxidations of ketocytochalasin to precytochalasin and cytochalasin Z(16) are among the final steps leading to cytochalasin E and K and are catalyzed by ccsB. The first oxygen insertion step follows that of the classic BVMO mechanism, generating the ester precytochalasin. Release of precytochalasin into an aqueous environment can generate the shunt product iso-precytochalasin through spontaneous isomerization. Alternatively, precytochalasin can undergo further oxidation by ccsB to yield the in-line carbonate-containing cytochalasin Z(16). Cytochalasin Z(16) is a precursor to cytochalasin E and cytochalasin K, whereas iso-precytochalasin is a precursor to cytochalasin Z(17) and rosellichalasin. The hydrolyase ccsE may catalyze hydrolysis of epoxide bond in cytochalasin E to afford cytochalasin K. The function of ccsF has not been assigned but it may play a role in post-PKS-NRPS biosynthetic step, resistance or transport of cytochalasins and related PKS-NRPS products. This Aspergillus clavatus (strain ATCC 1007 / CBS 513.65 / DSM 816 / NCTC 3887 / NRRL 1 / QM 1276 / 107) protein is Hydrolyase ccsE.